We begin with the raw amino-acid sequence, 131 residues long: CLAVATA3/ESR (CLE)-related protein ESR1 (131 aa).

Positions 1 to 26 (MASRMGMVAIVSLFVCALAASTSVNA) are cleaved as a signal peptide. A disordered region spans residues 49–131 (RQQQQGGFIG…IGPPPLSDRY (83 aa)). Residues P81 and P84 each carry the hydroxyproline modification. P84 carries O-linked (Ara...) hydroxyproline glycosylation.

It belongs to the CLV3/ESR signal peptide family. In terms of processing, the O-glycosylation (arabinosylation) of the hydroxyproline Pro-84 enhances binding affinity of the ESR1p peptide for its receptor. In terms of tissue distribution, seed endosperm.

It is found in the secreted. Its subcellular location is the extracellular space. In terms of biological role, extracellular signal peptide that regulates cell fate. The sequence is that of CLAVATA3/ESR (CLE)-related protein ESR1 from Zea mays (Maize).